The chain runs to 198 residues: Ribonuclease HII (198 aa).

In terms of domain architecture, RNase H type-2 spans 14–198; it reads HMIVGVDEAG…FAPVAQLQLV (185 aa). A divalent metal cation-binding residues include Asp-20, Glu-21, and Asp-110.

It belongs to the RNase HII family. Requires Mn(2+) as cofactor. It depends on Mg(2+) as a cofactor.

The protein localises to the cytoplasm. The enzyme catalyses Endonucleolytic cleavage to 5'-phosphomonoester.. Endonuclease that specifically degrades the RNA of RNA-DNA hybrids. In Sphingopyxis alaskensis (strain DSM 13593 / LMG 18877 / RB2256) (Sphingomonas alaskensis), this protein is Ribonuclease HII.